The primary structure comprises 445 residues: Exodeoxyribonuclease 7 large subunit (445 aa).

This sequence belongs to the XseA family. Heterooligomer composed of large and small subunits.

Its subcellular location is the cytoplasm. The catalysed reaction is Exonucleolytic cleavage in either 5'- to 3'- or 3'- to 5'-direction to yield nucleoside 5'-phosphates.. Bidirectionally degrades single-stranded DNA into large acid-insoluble oligonucleotides, which are then degraded further into small acid-soluble oligonucleotides. This chain is Exodeoxyribonuclease 7 large subunit, found in Shewanella oneidensis (strain ATCC 700550 / JCM 31522 / CIP 106686 / LMG 19005 / NCIMB 14063 / MR-1).